A 447-amino-acid chain; its full sequence is Guanine nucleotide-binding protein alpha-1 subunit (447 aa).

Gly-2 is lipidated: N-myristoyl glycine. Cys-3 carries S-palmitoyl cysteine lipidation. A G-alpha domain is found at 40–447; it reads NEVKLLLLGA…QQNLKKSGIL (408 aa). The tract at residues 43-56 is G1 motif; it reads KLLLLGAGESGKST. GTP-binding residues include Glu-51, Ser-52, Gly-53, Lys-54, Ser-55, Thr-56, Leu-269, Thr-275, Gly-297, Asn-363, Lys-364, Asp-366, and Ala-419. Residue Ser-55 participates in Mg(2+) binding. Positions 267-275 are G2 motif; it reads DILKGRIKT. Residue Thr-275 participates in Mg(2+) binding. The interval 290–299 is G3 motif; the sequence is FKVYDAGGQR. Positions 359–366 are G4 motif; it reads ILFLNKVD. The G5 motif stretch occupies residues 417–422; the sequence is TCATDT.

It belongs to the G-alpha family. G proteins are composed of 3 units; alpha, beta and gamma. The alpha chain contains the guanine nucleotide binding site. Requires Mg(2+) as cofactor.

In terms of biological role, guanine nucleotide-binding proteins (G proteins) are involved as modulators or transducers in various transmembrane signaling systems. This protein is involved in the mating response pathway. In Kluyveromyces lactis (strain ATCC 8585 / CBS 2359 / DSM 70799 / NBRC 1267 / NRRL Y-1140 / WM37) (Yeast), this protein is Guanine nucleotide-binding protein alpha-1 subunit (GPA1).